Here is a 122-residue protein sequence, read N- to C-terminus: Ribosome-binding factor A (122 aa).

This sequence belongs to the RbfA family. Monomer. Binds 30S ribosomal subunits, but not 50S ribosomal subunits or 70S ribosomes.

The protein localises to the cytoplasm. Its function is as follows. One of several proteins that assist in the late maturation steps of the functional core of the 30S ribosomal subunit. Associates with free 30S ribosomal subunits (but not with 30S subunits that are part of 70S ribosomes or polysomes). Required for efficient processing of 16S rRNA. May interact with the 5'-terminal helix region of 16S rRNA. This is Ribosome-binding factor A from Prosthecochloris aestuarii (strain DSM 271 / SK 413).